Here is a 744-residue protein sequence, read N- to C-terminus: MSLFRLVEWVSQTIPNTSTILNASFFQDREQLVIGGENGQITISDPGFRDTNAHVLCTTETKYAILQMASDNFLPSMNNILAVLSPTKLTYYKVHFASPDETLASLDEIFSHSFSTSAWNMCVIPIEESTPQILVQSIDCKLSLFQGDQCVFSMVPLRALQPGPIGYCQTTQTLFVANNGFLAAIKFSLMSSGSQKKINYDWSFNLGDTAIQMKVTEGSKPTTIVLCRRHVSAFNATGSVVWQIRLEAVGMAMCLYRSLLINNTQFNRLIVSTSDDTLLIFQDNKLVWNCNAQMSPVALLVCSYNKSYENTITMMAPDGKVVVGYLGTEPNLYRLPEDKVIVNYAERMEEYKRMEQKIKESDAAGGAIKRKEGIQMKLSIGEIGKRTIEPNAASNAPYCNLIVEFSEVQNVSKLHINILSECASPSKQVILNVGTSKSTASIEIPFYVGSKKSPTSNKVTIAAHCAFTQLTVTKSIDLPFKVLFEESQIDRNAKYKVTIDTAGSVMPLNKLFSEFESENPQAIGFSLHGSDKTVSVFAANKSNRYRIQSEHISLLQITSRELVKRIAESAPGIEIGGVIPFEYMRETLDEIQELQTKKKEDSKKIDCRTKEVRAIEALSLNSCKTGNMGNLPSLDALFDKSYRELLDAMDSYNSLTAKIENQKASLNSLFQLAADLSKLSKVDTILNGSFWANTQQSLRDRLRWAVKTDRGNEMTMIEKLCEHSPKELPKIREEEEEEEQQVTA.

Over residues 722–733 the composition is skewed to basic and acidic residues; sequence EHSPKELPKIRE. Positions 722-744 are disordered; it reads EHSPKELPKIREEEEEEEQQVTA. A compositionally biased stretch (acidic residues) spans 734 to 744; sequence EEEEEEQQVTA.

In terms of assembly, part of BBSome complex, that contains bbs-1, bbs-2, bbs-4, bbs-5, osm-12, bbs-8/ttc-8 and bbs-9. Interacts with bbs-1.

Its function is as follows. Component of the BBSome complex. The BBSome complex is thought to function as a coat complex required for sorting of specific membrane proteins to the primary cilia. The BBSome complex is required for ciliogenesis but is dispensable for centriolar satellite function. Required for proper BBSome complex assembly and its ciliary localization. Required for cilia biogenesis and both the assembly and movement of intraflagellar transport proteins along the ciliary axoneme. In ciliated sensory neurons, required for the sensation of nitric oxide and avoidance of NO-producing organisms like P.aeruginosa. The chain is Protein pthb1 homolog from Caenorhabditis elegans.